The following is a 496-amino-acid chain: Glutamate--tRNA ligase (496 aa).

Positions 10 to 20 match the 'HIGH' region motif; it reads PSPTGPLHIGG. The 'KMSKS' region signature appears at 251–255; it reads KMSKR. Lysine 254 lines the ATP pocket.

This sequence belongs to the class-I aminoacyl-tRNA synthetase family. Glutamate--tRNA ligase type 1 subfamily. Monomer.

Its subcellular location is the cytoplasm. The enzyme catalyses tRNA(Glu) + L-glutamate + ATP = L-glutamyl-tRNA(Glu) + AMP + diphosphate. Catalyzes the attachment of glutamate to tRNA(Glu) in a two-step reaction: glutamate is first activated by ATP to form Glu-AMP and then transferred to the acceptor end of tRNA(Glu). The polypeptide is Glutamate--tRNA ligase (Heliobacterium modesticaldum (strain ATCC 51547 / Ice1)).